We begin with the raw amino-acid sequence, 177 residues long: Secretion monitor (177 aa).

The first 37 residues, 1–37, serve as a signal peptide directing secretion; that stretch reads MIGILNRWRQFGRRYFWPHLLLGMVAASLGVPLNLSG.

This sequence belongs to the SecM family.

It is found in the cytoplasm. Its subcellular location is the cytosol. The protein localises to the periplasm. Functionally, regulates secA expression by translational coupling of the secM secA operon. Translational pausing at a specific Pro residue 5 residues before the end of the protein may allow disruption of a mRNA repressor helix that normally suppresses secA translation initiation. This is Secretion monitor from Yersinia pestis bv. Antiqua (strain Antiqua).